Reading from the N-terminus, the 182-residue chain is Ribosome-recycling factor (182 aa).

The disordered stretch occupies residues 136 to 156; sequence IRKQEKNSDISKDESRDLQDK.

Belongs to the RRF family.

Its subcellular location is the cytoplasm. In terms of biological role, responsible for the release of ribosomes from messenger RNA at the termination of protein biosynthesis. May increase the efficiency of translation by recycling ribosomes from one round of translation to another. This chain is Ribosome-recycling factor, found in Trichodesmium erythraeum (strain IMS101).